We begin with the raw amino-acid sequence, 284 residues long: NAD kinase (284 aa).

Asp61 functions as the Proton acceptor in the catalytic mechanism. Residues 61–62 (DG), Arg66, 136–137 (ND), Arg147, Lys164, Asp166, and Leu201 contribute to the NAD(+) site.

It belongs to the NAD kinase family. The cofactor is a divalent metal cation.

It localises to the cytoplasm. The catalysed reaction is NAD(+) + ATP = ADP + NADP(+) + H(+). Involved in the regulation of the intracellular balance of NAD and NADP, and is a key enzyme in the biosynthesis of NADP. Catalyzes specifically the phosphorylation on 2'-hydroxyl of the adenosine moiety of NAD to yield NADP. This Dehalococcoides mccartyi (strain ATCC BAA-2100 / JCM 16839 / KCTC 5957 / BAV1) protein is NAD kinase.